Consider the following 329-residue polypeptide: Pantothenate kinase (329 aa).

Residue 107 to 114 (GSVAVGKS) participates in ATP binding.

The protein belongs to the prokaryotic pantothenate kinase family.

Its subcellular location is the cytoplasm. The catalysed reaction is (R)-pantothenate + ATP = (R)-4'-phosphopantothenate + ADP + H(+). It participates in cofactor biosynthesis; coenzyme A biosynthesis; CoA from (R)-pantothenate: step 1/5. The protein is Pantothenate kinase of Streptomyces avermitilis (strain ATCC 31267 / DSM 46492 / JCM 5070 / NBRC 14893 / NCIMB 12804 / NRRL 8165 / MA-4680).